A 737-amino-acid chain; its full sequence is Ribosome-releasing factor 2, mitochondrial (737 aa).

A mitochondrion-targeting transit peptide spans 1–29; it reads MLKYALHSGGMPRNRLLRQLSAHIFRRSY. A tr-type G domain is found at 31 to 310; sequence SNIRNIGILA…AVNTYLPAPE (280 aa). Residues 40 to 47, 104 to 108, and 158 to 161 each bind GTP; these read AHIDAGKT, DTPGH, and NKMD.

It belongs to the TRAFAC class translation factor GTPase superfamily. Classic translation factor GTPase family. EF-G/EF-2 subfamily.

The protein resides in the mitochondrion. Its function is as follows. Mitochondrial GTPase that mediates the disassembly of ribosomes from messenger RNA at the termination of mitochondrial protein biosynthesis. Not involved in the GTP-dependent ribosomal translocation step during translation elongation. This Drosophila pseudoobscura pseudoobscura (Fruit fly) protein is Ribosome-releasing factor 2, mitochondrial.